We begin with the raw amino-acid sequence, 310 residues long: Cytosolic Fe-S cluster assembly factor Nubp1 homolog (310 aa).

Residues Cys9, Cys23, Cys26, and Cys32 each contribute to the [4Fe-4S] cluster site. An ATP-binding site is contributed by 63–70 (GKGGVGKS). 2 residues coordinate [4Fe-4S] cluster: Cys240 and Cys243.

This sequence belongs to the Mrp/NBP35 ATP-binding proteins family. NUBP1/NBP35 subfamily. Heterotetramer of 2 Nubp1 and 2 Nubp2 chains. It depends on [4Fe-4S] cluster as a cofactor.

It is found in the cytoplasm. Its function is as follows. Component of the cytosolic iron-sulfur (Fe/S) protein assembly (CIA) machinery. Required for maturation of extramitochondrial Fe-S proteins. The Nubp1-Nubp2 heterotetramer forms a Fe-S scaffold complex, mediating the de novo assembly of an Fe-S cluster and its transfer to target apoproteins. This Drosophila mojavensis (Fruit fly) protein is Cytosolic Fe-S cluster assembly factor Nubp1 homolog.